Reading from the N-terminus, the 320-residue chain is GTPase Era (320 aa).

The region spanning 25–193 (HCGFIAIVGR…RKHVRDHLPK (169 aa)) is the Era-type G domain. The interval 33-40 (GRPNVGKS) is G1. 33–40 (GRPNVGKS) lines the GTP pocket. The G2 stretch occupies residues 59 to 63 (QTTRH). The tract at residues 80-83 (DTPG) is G3. GTP is bound by residues 80–84 (DTPGL) and 142–145 (NKVD). A G4 region spans residues 142-145 (NKVD). Residues 172 to 174 (ISA) form a G5 region. The KH type-2 domain occupies 216-302 (VREKLMRFTG…YLETWVKVKS (87 aa)).

The protein belongs to the TRAFAC class TrmE-Era-EngA-EngB-Septin-like GTPase superfamily. Era GTPase family. As to quaternary structure, monomer.

It localises to the cytoplasm. The protein localises to the cell inner membrane. Its function is as follows. An essential GTPase that binds both GDP and GTP, with rapid nucleotide exchange. Plays a role in 16S rRNA processing and 30S ribosomal subunit biogenesis and possibly also in cell cycle regulation and energy metabolism. This Vibrio vulnificus (strain CMCP6) protein is GTPase Era.